Consider the following 373-residue polypeptide: PqqA peptide cyclase (373 aa).

Positions 7–227 (ILNPVGLLAE…EVYAGVIVID (221 aa)) constitute a Radical SAM core domain. The [4Fe-4S] cluster site is built by cysteine 21, cysteine 25, and cysteine 28.

The protein belongs to the radical SAM superfamily. PqqE family. In terms of assembly, interacts with PqqD. The interaction is necessary for activity of PqqE. [4Fe-4S] cluster serves as cofactor.

It carries out the reaction [PQQ precursor protein] + S-adenosyl-L-methionine = E-Y cross-linked-[PQQ precursor protein] + 5'-deoxyadenosine + L-methionine + H(+). The protein operates within cofactor biosynthesis; pyrroloquinoline quinone biosynthesis. Its function is as follows. Catalyzes the cross-linking of a glutamate residue and a tyrosine residue in the PqqA protein as part of the biosynthesis of pyrroloquinoline quinone (PQQ). This chain is PqqA peptide cyclase, found in Methylocella silvestris (strain DSM 15510 / CIP 108128 / LMG 27833 / NCIMB 13906 / BL2).